Here is a 971-residue protein sequence, read N- to C-terminus: Isoleucine--tRNA ligase (971 aa).

The 'HIGH' region motif lies at 60-70; the sequence is PYANGDLHIGH. E563 provides a ligand contact to L-isoleucyl-5'-AMP. The 'KMSKS' region signature appears at 604 to 608; that stretch reads KMSKS. K607 contributes to the ATP binding site. C922, C925, C942, and C945 together coordinate Zn(2+).

It belongs to the class-I aminoacyl-tRNA synthetase family. IleS type 1 subfamily. In terms of assembly, monomer. The cofactor is Zn(2+).

The protein localises to the cytoplasm. The enzyme catalyses tRNA(Ile) + L-isoleucine + ATP = L-isoleucyl-tRNA(Ile) + AMP + diphosphate. Its function is as follows. Catalyzes the attachment of isoleucine to tRNA(Ile). As IleRS can inadvertently accommodate and process structurally similar amino acids such as valine, to avoid such errors it has two additional distinct tRNA(Ile)-dependent editing activities. One activity is designated as 'pretransfer' editing and involves the hydrolysis of activated Val-AMP. The other activity is designated 'posttransfer' editing and involves deacylation of mischarged Val-tRNA(Ile). This is Isoleucine--tRNA ligase from Acaryochloris marina (strain MBIC 11017).